The chain runs to 30 residues: Acyl-CoA-binding protein 1 (30 aa).

A compositionally biased stretch (basic and acidic residues) spans 1–15 (ALKDEFEEHAEKAKT). Residues 1-30 (ALKDEFEEHAEKAKTLPENTSNENKLILYG) form a disordered region. The region spanning 2–30 (LKDEFEEHAEKAKTLPENTSNENKLILYG) is the ACB domain.

This sequence belongs to the ACBP family.

Its subcellular location is the cytoplasm. Binds medium- and long-chain acyl-CoA esters with very high affinity and may function as an intracellular carrier of acyl-CoA esters. The polypeptide is Acyl-CoA-binding protein 1 (Digitalis lanata (Grecian foxglove)).